Here is a 576-residue protein sequence, read N- to C-terminus: 4-alpha-glucanotransferase, chloroplastic/amyloplastic (576 aa).

The N-terminal 52 residues, 1 to 52, are a transit peptide targeting the chloroplast; the sequence is MAIHTCFSLIPSSFSSPKLPYPKNTTFQSPIPKLSRPTFMFDRKGSFQNGTA.

Belongs to the disproportionating enzyme family. Present in leaves, stems, roots, and stolons but is most abundant in developing and mature tubers.

It localises to the plastid. The protein localises to the chloroplast. Its subcellular location is the amyloplast. It carries out the reaction Transfers a segment of a (1-&gt;4)-alpha-D-glucan to a new position in an acceptor, which may be glucose or a (1-&gt;4)-alpha-D-glucan.. Its function is as follows. May act during starch breakdown to convert small oligosaccharides into larger molecules upon which starch phosphorylase can act, or may change the structure of starch molecules and grain architecture by modifying chain length, or may generate from starch and glucose oligosaccharides which can serve either as primers for new starch phosphoenzyme. In Solanum tuberosum (Potato), this protein is 4-alpha-glucanotransferase, chloroplastic/amyloplastic (DPEP).